The sequence spans 529 residues: Bifunctional purine biosynthesis protein PurH (529 aa).

One can recognise an MGS-like domain in the interval 2–148 (QQLRPIHRAL…KNHKDVAIVV (147 aa)).

It belongs to the PurH family.

The enzyme catalyses (6R)-10-formyltetrahydrofolate + 5-amino-1-(5-phospho-beta-D-ribosyl)imidazole-4-carboxamide = 5-formamido-1-(5-phospho-D-ribosyl)imidazole-4-carboxamide + (6S)-5,6,7,8-tetrahydrofolate. It carries out the reaction IMP + H2O = 5-formamido-1-(5-phospho-D-ribosyl)imidazole-4-carboxamide. It functions in the pathway purine metabolism; IMP biosynthesis via de novo pathway; 5-formamido-1-(5-phospho-D-ribosyl)imidazole-4-carboxamide from 5-amino-1-(5-phospho-D-ribosyl)imidazole-4-carboxamide (10-formyl THF route): step 1/1. The protein operates within purine metabolism; IMP biosynthesis via de novo pathway; IMP from 5-formamido-1-(5-phospho-D-ribosyl)imidazole-4-carboxamide: step 1/1. This is Bifunctional purine biosynthesis protein PurH from Photorhabdus laumondii subsp. laumondii (strain DSM 15139 / CIP 105565 / TT01) (Photorhabdus luminescens subsp. laumondii).